We begin with the raw amino-acid sequence, 1571 residues long: Phosphatidylinositol 3-kinase 1 (1571 aa).

Residues M1–N73 are compositionally biased toward low complexity. 3 disordered regions span residues M1–N119, G157–N195, and N283–R430. Positions I74 to Q85 are enriched in basic and acidic residues. Over residues N101 to N119 the composition is skewed to low complexity. Residues N283–P292 show a composition bias toward basic and acidic residues. Residues T294–T324 show a composition bias toward low complexity. Positions N325–K337 are enriched in polar residues. Composition is skewed to low complexity over residues K360–K382 and N405–N424. The PI3K-ABD domain maps to I530 to S627. One can recognise a PI3K-RBD domain in the interval G700–Q789. In terms of domain architecture, C2 PI3K-type spans I851–N1020. The 177-residue stretch at Q1040–A1216 folds into the PIK helical domain. In terms of domain architecture, PI3K/PI4K catalytic spans I1280–T1558. Positions Y1286–L1292 are G-loop. The tract at residues G1424–N1432 is catalytic loop. The segment at H1443–T1469 is activation loop.

Belongs to the PI3/PI4-kinase family.

It carries out the reaction a 1,2-diacyl-sn-glycero-3-phospho-(1D-myo-inositol) + ATP = a 1,2-diacyl-sn-glycero-3-phospho-(1D-myo-inositol-3-phosphate) + ADP + H(+). The sequence is that of Phosphatidylinositol 3-kinase 1 (pikA) from Dictyostelium discoideum (Social amoeba).